An 864-amino-acid chain; its full sequence is MHERYVPADVEAAAQGDWRAADAYKTREDSQKPKFYCVSMLPYPSGKLHMGHVRNYTINDVMYRYLRMNGYNTLMPMGWDAFGMPAENAAMANGVPPAKWTYDNIDYMKGQMQSMGLAIDWSREIATCKPDYYKWNQWLFLKMLEKGIAYKKTGTVNWDPVDQTVLANEQVIDGRGWRSGALVEKREIPMYYLRITQYADELLNDLDGLGWPERVKIMQQNWIGKSFGVNFGFPYELDGEKALLRVFTTRADTILGVTFCAVAAEHPLATRLAQGKPELQAFIDECKRGGVAEADVATMEKKGVATGFSVSHPLTGEPVEVWIGNYVLMSYGEGAVMGVPGHDERDFAFAKKYGLPIKQVIASEGQTYSLDAWQEWYGDKETAVCVNSGKYDGLRYADAVDAVAADLKAGGYGDKQVTWRLRDWGVSRQRYWGTPIPIIHCPSCGDVPVPEQDLPVVLPEDLVPDGSGNPLAKSEAFLNCSCPKCGAAAKRETDTMDTFVDSSWYFSRYTAPDADTMVDARTDYWMPMDQYIGGIEHAILHLLYSRFWTKVMRDLGLVKFGEPAKNLLTQGMVLNETFYREDASGKKTWYNPADVTVTHDDKGRPVGATLNTDGQPVVLGGIEKMSKSKNNGVDPQVLIDQYGADTARLFTMFAAPPEQQLEWSGAGVEGASRFLRRVWSFGATNREALATRAGFDAAALGDADKALRREIYSVLKQADFDYQRLQYNTVVSAAMKMLNAIDGAKGATPAVLRETYGVLLRVLYPVVPHVTFELWKALGYADEFGPLLDAPWPKVDEAALEQAEIELVLQVNGKVRGALKVAKDASREAIEAAAVADEAFAKFSDGKPAKKIVVVPGRLVNIVV.

The 'HIGH' region signature appears at 42–52; it reads PYPSGKLHMGH. Residues 624–628 carry the 'KMSKS' region motif; the sequence is KMSKS. K627 is a binding site for ATP.

Belongs to the class-I aminoacyl-tRNA synthetase family.

The protein localises to the cytoplasm. It carries out the reaction tRNA(Leu) + L-leucine + ATP = L-leucyl-tRNA(Leu) + AMP + diphosphate. The protein is Leucine--tRNA ligase of Burkholderia ambifaria (strain ATCC BAA-244 / DSM 16087 / CCUG 44356 / LMG 19182 / AMMD) (Burkholderia cepacia (strain AMMD)).